The primary structure comprises 328 residues: Putative UDP-N-acetylglucosamine--dolichyl-phosphate N-acetylglucosaminephosphotransferase (328 aa).

9 consecutive transmembrane segments (helical) span residues 1 to 21 (MLVSLLGILLSVIVGFVVTLI), 48 to 68 (VPVLGGIGIVAGFVAGSFTFL), 78 to 98 (IENVVVSILLSSLIIGFLGLL), 107 to 127 (ATRAFLPIFASIPLILYSVGH), 129 to 149 (IISIPFLGKVNFGILFYIIIL), 166 to 186 (LNGLGAGMGLIMALALAYIGL), 192 to 212 (SFYAGIVSIILASVLFGFLIF), 228 to 248 (FIGSVIGSIGISGYMYTALFF), and 301 to 321 (YHIVLIIWGIEILFAILAVVF).

It belongs to the glycosyltransferase 4 family.

The protein resides in the cell membrane. The catalysed reaction is a di-trans,poly-cis-dolichyl phosphate + UDP-N-acetyl-alpha-D-glucosamine = an N-acetyl-alpha-D-glucosaminyl-diphospho-di-trans,poly-cis-dolichol + UMP. Its activity is regulated as follows. Inhibited by tunicamycin. The chain is Putative UDP-N-acetylglucosamine--dolichyl-phosphate N-acetylglucosaminephosphotransferase (gnpTA) from Sulfolobus acidocaldarius (strain ATCC 33909 / DSM 639 / JCM 8929 / NBRC 15157 / NCIMB 11770).